The following is a 407-amino-acid chain: MTYPNLLDRFLTYVKVNTRSDEHSTTTPSTQSQVDFATNVLIPEMKRVGLQNVYYLPNGFAIGTLPANDPSLTRKIGFISHMDTADFNAEGVNPQVIENYDGGVIELGNSGFKLDPADFKSLEKYPGQTLITTDGTSLLGADDKSGIAEIMTAIEYLTAHPEIKHCEIRVGFGPDEEIGVGANKFDAEDFDVDFAYTVDGGPLGELQYETFSAAGAELHFQGRNVHPGTAKEQMVNALQLAIDFHNQLPENDRPELTEGYQGFYHLMDVTGSVEEVRASYIIRDFEKDAFEARKASMQSIADKMNAELGSYRVTLNLTDQYYNMKEVIEKDMTPITIAKAVMEDLGITPIIEPIRGGTDGSKISFMGIPTPNIFAGGENMHGRFEYVSLQTMERAVDTIIGIVAYKG.

His81 is a binding site for Zn(2+). Residue Asp83 is part of the active site. Asp142 is a binding site for Zn(2+). The active-site Proton acceptor is the Glu176. Glu177, Asp199, and His381 together coordinate Zn(2+).

Belongs to the peptidase M20B family. Zn(2+) is required as a cofactor.

The protein localises to the cytoplasm. It catalyses the reaction Release of the N-terminal residue from a tripeptide.. Cleaves the N-terminal amino acid of tripeptides. The protein is Peptidase T of Streptococcus pneumoniae (strain ATCC 700669 / Spain 23F-1).